The following is a 107-amino-acid chain: MTKNKNLEFIQNAIKKNKVVLFMKGTKEMPACGFSGTVVAILNKLGVEFSDINVLFDTALREDLKKFSDWPTFPQLYINGVLVGGCDIAKELYQNGELEKMLKDVVV.

Residues 7-107 (LEFIQNAIKK…LEKMLKDVVV (101 aa)) form the Glutaredoxin domain. A glutathione-binding site is contributed by K24. [2Fe-2S] cluster is bound at residue C32. Residues R61, F73, and 86–87 (CD) each bind glutathione.

Belongs to the glutaredoxin family. Monothiol subfamily.

In Rickettsia prowazekii (strain Madrid E), this protein is Probable monothiol glutaredoxin 2 (grxC2).